We begin with the raw amino-acid sequence, 582 residues long: Protein NARROW LEAF 1 (582 aa).

2 disordered regions span residues 1–26 (MKPS…VDHQ) and 531–582 (GMSP…DLEK). Positions 562-572 (LGDREPKRLRS) are enriched in basic and acidic residues. A Nuclear localization signal motif is present at residues 567–573 (PKRLRSD). Low complexity predominate over residues 573–582 (DSGSSLDLEK).

In terms of tissue distribution, expressed in leaf sheaths, leaf blades, culms and panicles. Preferentially expressed in vascular tissues in leaves and culms.

The protein resides in the nucleus. The protein localises to the nucleoplasm. It is found in the cytoplasm. In terms of biological role, involved in the regulation of lateral leaf growth. May be involved in the regulation of basipetal polar auxin transport (PAT) and vascular patterning in leaves. Controls photosynthesis rate by regulating carboxylation efficiency and consequently photosynthesis rate. Controls panicle and spikelet numbers, and grain yield. The polypeptide is Protein NARROW LEAF 1 (Oryza sativa subsp. japonica (Rice)).